Consider the following 71-residue polypeptide: Small ribosomal subunit protein bS21 (71 aa).

Belongs to the bacterial ribosomal protein bS21 family.

The polypeptide is Small ribosomal subunit protein bS21 (Baumannia cicadellinicola subsp. Homalodisca coagulata).